The chain runs to 466 residues: Uronate isomerase (466 aa).

The protein belongs to the metallo-dependent hydrolases superfamily. Uronate isomerase family.

It carries out the reaction D-glucuronate = D-fructuronate. It catalyses the reaction aldehydo-D-galacturonate = keto-D-tagaturonate. It functions in the pathway carbohydrate metabolism; pentose and glucuronate interconversion. The protein is Uronate isomerase of Streptococcus agalactiae serotype V (strain ATCC BAA-611 / 2603 V/R).